Consider the following 274-residue polypeptide: Large ribosomal subunit protein uL2cz (274 aa).

2 disordered regions span residues 1–25 and 224–274; these read MAIH…VKSN and NPVD…RRSK. Over residues 7-25 the composition is skewed to polar residues; sequence KTSTPSTRNGTVDSQVKSN.

It belongs to the universal ribosomal protein uL2 family. In terms of assembly, part of the 50S ribosomal subunit.

The protein localises to the plastid. The protein resides in the chloroplast. This is Large ribosomal subunit protein uL2cz (rpl2-A) from Atropa belladonna (Belladonna).